A 274-amino-acid polypeptide reads, in one-letter code: MGTDSRAAGALLARASTLHLQTGNLLNWGRLRKKCPSTHSEELRDCIQKTLNEWSSQISPDLVREFPDVLECTMSHAVEKINPDEREEMKVSAKLFIVGSNSSSSTRSAVDMACSVLGVAQLDSVIMASPPIEDGVNLSLEHLQPYWEELENLVQSKKIVAIGTSDLDKTQLEQLYQWAQVKPNSNQVNLASCCVMPPDLTAFAKQFDIQLLTHNDPKELLSEASFQEALQESIPDIEAQDWVPLWLLRYSVIVKSRGIIKSKGYILQAKRRGS.

Serine 59 is modified (phosphoserine). Lysine 263 is modified (N6-acetyllysine).

Belongs to the aldo/keto reductase family. Glutamate--cysteine ligase light chain subfamily. As to quaternary structure, heterodimer of a catalytic heavy chain and a regulatory light chain.

The protein operates within sulfur metabolism; glutathione biosynthesis; glutathione from L-cysteine and L-glutamate: step 1/2. The polypeptide is Glutamate--cysteine ligase regulatory subunit (Gclm) (Mus musculus (Mouse)).